The primary structure comprises 346 residues: Protein RecA (346 aa).

67–74 contributes to the ATP binding site; it reads GPESSGKT.

The protein belongs to the RecA family.

It is found in the cytoplasm. Can catalyze the hydrolysis of ATP in the presence of single-stranded DNA, the ATP-dependent uptake of single-stranded DNA by duplex DNA, and the ATP-dependent hybridization of homologous single-stranded DNAs. It interacts with LexA causing its activation and leading to its autocatalytic cleavage. This is Protein RecA from Saccharopolyspora erythraea (strain ATCC 11635 / DSM 40517 / JCM 4748 / NBRC 13426 / NCIMB 8594 / NRRL 2338).